A 513-amino-acid polypeptide reads, in one-letter code: ATP synthase subunit alpha (513 aa).

169 to 176 (GDRQIGKT) contributes to the ATP binding site.

This sequence belongs to the ATPase alpha/beta chains family. As to quaternary structure, F-type ATPases have 2 components, CF(1) - the catalytic core - and CF(0) - the membrane proton channel. CF(1) has five subunits: alpha(3), beta(3), gamma(1), delta(1), epsilon(1). CF(0) has three main subunits: a(1), b(2) and c(9-12). The alpha and beta chains form an alternating ring which encloses part of the gamma chain. CF(1) is attached to CF(0) by a central stalk formed by the gamma and epsilon chains, while a peripheral stalk is formed by the delta and b chains.

It is found in the cell inner membrane. The catalysed reaction is ATP + H2O + 4 H(+)(in) = ADP + phosphate + 5 H(+)(out). Produces ATP from ADP in the presence of a proton gradient across the membrane. The alpha chain is a regulatory subunit. This chain is ATP synthase subunit alpha, found in Francisella tularensis subsp. mediasiatica (strain FSC147).